We begin with the raw amino-acid sequence, 307 residues long: Mitochondrial glycine transporter YMC1 (307 aa).

Solcar repeat units follow at residues Val-26–Phe-106, Pro-121–Asn-204, and Pro-218–Leu-305. The next 6 helical transmembrane spans lie at Leu-29–Thr-49, Leu-83–Met-103, Leu-118–Ala-138, Thr-183–Ala-203, Cys-223–Ile-243, and Phe-277–Thr-298.

It belongs to the mitochondrial carrier (TC 2.A.29) family.

Its subcellular location is the mitochondrion inner membrane. Secondary mitochondrial glycine transporter required for the biosynthesis of heme at high glycine concentrations. Imports the precursor glycine into the mitochondrial matrix, where it is condensed with succinyl-CoA to produce 5-aminolevulinate (ALA), the first step of heme biosynthesis. The sequence is that of Mitochondrial glycine transporter YMC1 from Saccharomyces cerevisiae (strain ATCC 204508 / S288c) (Baker's yeast).